Reading from the N-terminus, the 794-residue chain is Phenylalanine--tRNA ligase beta subunit (794 aa).

The 119-residue stretch at 40 to 158 (NSLNSELVLG…LKKYLGKDVK (119 aa)) folds into the tRNA-binding domain. The B5 domain maps to 402–477 (KNKTEFEIKI…RLYSYDNIQE (76 aa)). Mg(2+) is bound by residues Asp455, Asp461, Glu464, and Glu465. Positions 702–794 (SKFQSSSRDL…NVKKMKVVIR (93 aa)) constitute an FDX-ACB domain.

It belongs to the phenylalanyl-tRNA synthetase beta subunit family. Type 1 subfamily. Tetramer of two alpha and two beta subunits. Mg(2+) is required as a cofactor.

It is found in the cytoplasm. It catalyses the reaction tRNA(Phe) + L-phenylalanine + ATP = L-phenylalanyl-tRNA(Phe) + AMP + diphosphate + H(+). The polypeptide is Phenylalanine--tRNA ligase beta subunit (Mycoplasma capricolum subsp. capricolum (strain California kid / ATCC 27343 / NCTC 10154)).